The chain runs to 471 residues: RuvB-like protein 2 (471 aa).

Residue 75–82 (GPPSTGKT) coordinates ATP.

Belongs to the RuvB family. As to quaternary structure, probably forms a homohexamer. Interacts with RVB1 and may form heterododecamers with RVB1. Component of the SWR1 chromatin remodeling complex composed of at least ACT1, ARP4, RVB1, RVB2, ARP6, YAF9, VPS71, VPS72, SWC3, SWC4, SWC5, SWC7 and SWR1, and perhaps BDF1. Component of the chromatin-remodeling INO80 complex, at least composed of ARP4, ARP5, ARP8, RVB1, RVB2, TAF14, NHP10, IES1, IES3, IES4, IES6, ACT1, IES2, IES5 and INO80. Also belongs to the R2TP complex composed of at least RVB1, RVB2, TAH1 and PIH1. Interacts with SPT15/TBP.

The protein localises to the nucleus. It is found in the nucleoplasm. It carries out the reaction ATP + H2O = ADP + phosphate + H(+). In terms of biological role, DNA helicase which participates in several chromatin remodeling complexes, including the SWR1 and the INO80 complexes. The SWR1 complex mediates the ATP-dependent exchange of histone H2A for the H2A variant HZT1 leading to transcriptional regulation of selected genes by chromatin remodeling. The INO80 complex remodels chromatin by shifting nucleosomes. Its ability to induce transcription of some phosphate-responsive genes is modulated by inositol polyphosphates. The INO80 complex is involved in DNA repair by associating to 'Ser-129' phosphorylated H2A histones as a response to DNA damage. During transcription may recruit SPT15/TBP to the TATA-boxes of involved genes. Required for box C/D and box H/ACA snoRNA accumulation and involved in pre-rRNA processing. This chain is RuvB-like protein 2 (RVB2), found in Saccharomyces cerevisiae (strain ATCC 204508 / S288c) (Baker's yeast).